Here is a 106-residue protein sequence, read N- to C-terminus: ATP-dependent Clp protease adapter protein ClpS (106 aa).

This sequence belongs to the ClpS family. In terms of assembly, binds to the N-terminal domain of the chaperone ClpA.

Its function is as follows. Involved in the modulation of the specificity of the ClpAP-mediated ATP-dependent protein degradation. In Methylococcus capsulatus (strain ATCC 33009 / NCIMB 11132 / Bath), this protein is ATP-dependent Clp protease adapter protein ClpS.